We begin with the raw amino-acid sequence, 602 residues long: UvrABC system protein C (602 aa).

The GIY-YIG domain occupies 15-100; that stretch reads DQSGVYHYFD…IKQLKPKYNI (86 aa). In terms of domain architecture, UVR spans 206-241; that stretch reads SKLISRLKERMEKLAENLRFEEAGELRDRIEKIKRI.

The protein belongs to the UvrC family. As to quaternary structure, interacts with UvrB in an incision complex.

The protein resides in the cytoplasm. Its function is as follows. The UvrABC repair system catalyzes the recognition and processing of DNA lesions. UvrC both incises the 5' and 3' sides of the lesion. The N-terminal half is responsible for the 3' incision and the C-terminal half is responsible for the 5' incision. This Wolinella succinogenes (strain ATCC 29543 / DSM 1740 / CCUG 13145 / JCM 31913 / LMG 7466 / NCTC 11488 / FDC 602W) (Vibrio succinogenes) protein is UvrABC system protein C.